The primary structure comprises 337 residues: UPF0252 protein PH1321 (337 aa).

Residues 100–120 (IIGMLFLVFIILPAITSNLWS) form a helical membrane-spanning segment.

It belongs to the UPF0252 family.

The protein resides in the membrane. The chain is UPF0252 protein PH1321 from Pyrococcus horikoshii (strain ATCC 700860 / DSM 12428 / JCM 9974 / NBRC 100139 / OT-3).